The following is a 336-amino-acid chain: Toluate 1,2-dioxygenase electron transfer component (336 aa).

The 95-residue stretch at 3-97 (HKVATDFEDG…DCVIRVPAAS (95 aa)) folds into the 2Fe-2S ferredoxin-type domain. Residues cysteine 40, cysteine 45, cysteine 48, and cysteine 81 each contribute to the [2Fe-2S] cluster site. The interval 99–336 (VCKTQQAGYQ…FYYEKFAASA (238 aa)) is ferredoxin-reductase. Residues 104–204 (QAGYQAAISN…AGPLGAFYLR (101 aa)) enclose the FAD-binding FR-type domain.

Belongs to the bacterial ring-hydroxylating dioxygenase ferredoxin reductase family. In terms of assembly, this dioxygenase system consists of three proteins: the two subunits of the hydroxylase component (XylX and XylY), and an electron transfer component (XylZ). Requires FAD as cofactor. It depends on [2Fe-2S] cluster as a cofactor.

The enzyme catalyses 2 reduced [2Fe-2S]-[ferredoxin] + NAD(+) + H(+) = 2 oxidized [2Fe-2S]-[ferredoxin] + NADH. In terms of biological role, electron transfer component of toluate 1,2-dioxygenase system. The sequence is that of Toluate 1,2-dioxygenase electron transfer component (xylZ) from Pseudomonas putida (Arthrobacter siderocapsulatus).